We begin with the raw amino-acid sequence, 287 residues long: Ribosomal RNA small subunit methyltransferase A (287 aa).

6 residues coordinate S-adenosyl-L-methionine: Asn-35, Val-37, Gly-62, Glu-83, Asp-113, and Asn-131.

It belongs to the class I-like SAM-binding methyltransferase superfamily. rRNA adenine N(6)-methyltransferase family. RsmA subfamily.

The protein resides in the cytoplasm. The catalysed reaction is adenosine(1518)/adenosine(1519) in 16S rRNA + 4 S-adenosyl-L-methionine = N(6)-dimethyladenosine(1518)/N(6)-dimethyladenosine(1519) in 16S rRNA + 4 S-adenosyl-L-homocysteine + 4 H(+). Functionally, specifically dimethylates two adjacent adenosines (A1518 and A1519) in the loop of a conserved hairpin near the 3'-end of 16S rRNA in the 30S particle. May play a critical role in biogenesis of 30S subunits. The protein is Ribosomal RNA small subunit methyltransferase A of Thermobifida fusca (strain YX).